Consider the following 404-residue polypeptide: Cysteine desulfurase IscS (404 aa).

Residues 75 to 76 (AT), asparagine 155, glutamine 183, and 203 to 205 (SAH) each bind pyridoxal 5'-phosphate. Lysine 206 is modified (N6-(pyridoxal phosphate)lysine). Threonine 243 lines the pyridoxal 5'-phosphate pocket. The Cysteine persulfide intermediate role is filled by cysteine 328. [2Fe-2S] cluster is bound at residue cysteine 328.

It belongs to the class-V pyridoxal-phosphate-dependent aminotransferase family. NifS/IscS subfamily. Homodimer. Forms a heterotetramer with IscU, interacts with other sulfur acceptors. Pyridoxal 5'-phosphate is required as a cofactor.

It localises to the cytoplasm. The enzyme catalyses (sulfur carrier)-H + L-cysteine = (sulfur carrier)-SH + L-alanine. The protein operates within cofactor biosynthesis; iron-sulfur cluster biosynthesis. Functionally, master enzyme that delivers sulfur to a number of partners involved in Fe-S cluster assembly, tRNA modification or cofactor biosynthesis. Catalyzes the removal of elemental sulfur atoms from cysteine to produce alanine. Functions as a sulfur delivery protein for Fe-S cluster synthesis onto IscU, an Fe-S scaffold assembly protein, as well as other S acceptor proteins. The chain is Cysteine desulfurase IscS from Photorhabdus laumondii subsp. laumondii (strain DSM 15139 / CIP 105565 / TT01) (Photorhabdus luminescens subsp. laumondii).